A 316-amino-acid chain; its full sequence is MALLDDVKSELAAFEGDSPAAIKAQAAAMIRFGGGLRPVQNTYVIQAVFTSLDVAEWLKNTLRNTFGHEAEVNHLTRQTPNGPVETYVVLVTRNVVALALQTGLVDRRKQQVRGLPSEVVNGSIAQIKAAWRGAFMARGFLSDPGKASFLEIACPTEEAAMALCGVARRLGIQAKHRTLRSSERVTLKDPDAIERMLKLMGATRSAREWTGKRSDGEARGKANRLANFDDANMRRSAKAAAEASEKVQHAFEVLGDNIPDNLRQAGQLRIDHVDKSLEELGKIAEPQITKDAIAGRIRRLLQLAEKTEKARAAEGK.

The H-T-H motif DNA-binding region spans 276 to 309; that stretch reads SLEELGKIAEPQITKDAIAGRIRRLLQLAEKTEK.

This sequence belongs to the WhiA family.

Its function is as follows. Involved in cell division and chromosome segregation. The protein is Probable cell division protein WhiA of Bifidobacterium longum (strain NCC 2705).